The sequence spans 113 residues: Large ribosomal subunit protein bL17 (113 aa).

It belongs to the bacterial ribosomal protein bL17 family. Part of the 50S ribosomal subunit. Contacts protein L32.

This Alkaliphilus metalliredigens (strain QYMF) protein is Large ribosomal subunit protein bL17.